The chain runs to 433 residues: C2H2 type master regulator of conidiophore development brlA (433 aa).

Disordered regions lie at residues 24–49 (SDCPSMTSSFSPLDSPTPTPTSLYSQ), 240–269 (KSHTPSTPHRSVSMGTPSGSDTPVSRISGH), and 286–306 (MMQRHRQPSRKPSKKQLLRSN). Over residues 30 to 49 (TSSFSPLDSPTPTPTSLYSQ) the composition is skewed to low complexity. Polar residues predominate over residues 240–264 (KSHTPSTPHRSVSMGTPSGSDTPVS). Positions 288–302 (QRHRQPSRKPSKKQL) are enriched in basic residues. 2 consecutive C2H2-type zinc fingers follow at residues 321 to 345 (FKCKEPGCKGRFKRQEHLKRHMKSH) and 351 to 376 (HVCWVPGCHRAFSRSDNLNAHYTKTH). Residues 391-423 (ETSQDFDPDFRGQLTPDGRPIYGSKLEDSMPDC) are disordered.

The protein resides in the nucleus. BrlA, abaA and wetA are pivotal regulators of conidiophore development and conidium maturation. They act individually and together to regulate their own expression and that of numerous other sporulation-specific genes. Binds promoters of target genes at brlA response elements (BREs) containing the conserved sequence 5'-(C/A)(A/G)AGGG(G/A)-3'. Regulates genes involved in conidiogenesis. The polypeptide is C2H2 type master regulator of conidiophore development brlA (Penicillium digitatum (strain PHI26 / CECT 20796) (Green mold)).